The primary structure comprises 103 residues: Large ribosomal subunit protein bL21 (103 aa).

This sequence belongs to the bacterial ribosomal protein bL21 family. As to quaternary structure, part of the 50S ribosomal subunit. Contacts protein L20.

This protein binds to 23S rRNA in the presence of protein L20. The chain is Large ribosomal subunit protein bL21 from Herminiimonas arsenicoxydans.